Here is a 369-residue protein sequence, read N- to C-terminus: Probable peptidoglycan glycosyltransferase FtsW (369 aa).

8 consecutive transmembrane segments (helical) span residues 11 to 31 (LLSV…SSSV), 48 to 68 (NFIH…VPIY), 77 to 97 (LILC…SNHG), 134 to 151 (TSTI…KLLL), 154 to 174 (PDFG…FLIG), 177 to 197 (FLFL…LIYF), 265 to 285 (LGYL…FQGM), and 306 to 326 (ISLL…GILP).

The protein belongs to the SEDS family. FtsW subfamily.

It is found in the cell inner membrane. It carries out the reaction [GlcNAc-(1-&gt;4)-Mur2Ac(oyl-L-Ala-gamma-D-Glu-L-Lys-D-Ala-D-Ala)](n)-di-trans,octa-cis-undecaprenyl diphosphate + beta-D-GlcNAc-(1-&gt;4)-Mur2Ac(oyl-L-Ala-gamma-D-Glu-L-Lys-D-Ala-D-Ala)-di-trans,octa-cis-undecaprenyl diphosphate = [GlcNAc-(1-&gt;4)-Mur2Ac(oyl-L-Ala-gamma-D-Glu-L-Lys-D-Ala-D-Ala)](n+1)-di-trans,octa-cis-undecaprenyl diphosphate + di-trans,octa-cis-undecaprenyl diphosphate + H(+). It functions in the pathway cell wall biogenesis; peptidoglycan biosynthesis. Its function is as follows. Peptidoglycan polymerase that is essential for cell division. The sequence is that of Probable peptidoglycan glycosyltransferase FtsW from Riesia pediculicola (strain USDA).